The chain runs to 111 residues: HTH-type transcriptional regulator SinR (111 aa).

Residues 6–61 (IKQYRKEKGYSLSELAEKAGVAKSYLSSIERNLQTNPSIQFLEKVSAVLDVSVHTL) form the HTH cro/C1-type domain. Positions 17–36 (LSELAEKAGVAKSYLSSIER) form a DNA-binding region, H-T-H motif. The Sin domain occupies 65–103 (KHETEYDGQLDSEWEKLVRDAMTSGVSKKQFREFLDYQK).

Homotetramer in the absence of SinI. Heterodimer with SinI. Interaction with SinI disrupts the SinR tetramer and its repressor activity. Interacts with hpr.

Functionally, negative as well as positive regulator of alternate developmental processes that are induced at the end of vegetative growth in response to nutrient depletion. Binds to the alkaline protease (aprE) gene at two sites. Also acts as a repressor of the key sporulation gene spo0A. Negatively regulates transcription of the eps operon, which is responsible for the biosynthesis of an exopolysaccharide involved in biofilm formation; therefore it could govern the transition between a state in which bacteria swim or swarm and a state in which bacteria assemble into multicellular communities. Acts with Hpr as a corepressor of epr expression. Also negatively regulates transcription of the lutABC operon, which is required for lactate utilization. Repressor activity is regulated by SinI. This chain is HTH-type transcriptional regulator SinR (sinR), found in Bacillus subtilis (strain 168).